Consider the following 321-residue polypeptide: Ornithine carbamoyltransferase (321 aa).

Residues serine 53–threonine 56, glutamine 80, arginine 104, and histidine 131–glutamine 134 contribute to the carbamoyl phosphate site. L-ornithine is bound by residues asparagine 166, aspartate 230, and serine 234 to methionine 235. Residues cysteine 270–leucine 271 and arginine 298 contribute to the carbamoyl phosphate site.

This sequence belongs to the aspartate/ornithine carbamoyltransferase superfamily. OTCase family.

The protein localises to the cytoplasm. The catalysed reaction is carbamoyl phosphate + L-ornithine = L-citrulline + phosphate + H(+). Its pathway is amino-acid biosynthesis; L-arginine biosynthesis; L-arginine from L-ornithine and carbamoyl phosphate: step 1/3. In terms of biological role, reversibly catalyzes the transfer of the carbamoyl group from carbamoyl phosphate (CP) to the N(epsilon) atom of ornithine (ORN) to produce L-citrulline. The protein is Ornithine carbamoyltransferase of Bifidobacterium longum (strain NCC 2705).